The chain runs to 174 residues: ATP-dependent protease subunit HslV (174 aa).

Thr-2 is an active-site residue. Gly-157, Cys-160, and Thr-163 together coordinate Na(+).

The protein belongs to the peptidase T1B family. HslV subfamily. In terms of assembly, a double ring-shaped homohexamer of HslV is capped on each side by a ring-shaped HslU homohexamer. The assembly of the HslU/HslV complex is dependent on binding of ATP.

The protein localises to the cytoplasm. It carries out the reaction ATP-dependent cleavage of peptide bonds with broad specificity.. Its activity is regulated as follows. Allosterically activated by HslU binding. Its function is as follows. Protease subunit of a proteasome-like degradation complex believed to be a general protein degrading machinery. The sequence is that of ATP-dependent protease subunit HslV from Shewanella piezotolerans (strain WP3 / JCM 13877).